The chain runs to 312 residues: Olfactory receptor 13J1 (312 aa).

Over 1 to 25 the chain is Extracellular; that stretch reads MEPLNRTEVSEFFLKGFSGYPALEH. The N-linked (GlcNAc...) asparagine glycan is linked to N5. A helical membrane pass occupies residues 26-46; it reads LLFPLCSAMYLVTLLGNTAIM. Residues 47–54 lie on the Cytoplasmic side of the membrane; it reads AVSVLDIH. A helical transmembrane segment spans residues 55–75; the sequence is LHTPVYFFLGNLSTLDICYTP. Topologically, residues 76–99 are extracellular; the sequence is TFVPLMLVHLLSSRKTISFAVCAI. Cysteines 97 and 189 form a disulfide. Residues 100–120 form a helical membrane-spanning segment; it reads QMCLSLSTGSTECLLLAITAY. The Cytoplasmic segment spans residues 121–139; that stretch reads DRYLAICQPLRYHVLMSHR. The chain crosses the membrane as a helical span at residues 140–160; the sequence is LCVLLMGAAWVLCLLKSVTEM. Residues 161–197 lie on the Extracellular side of the membrane; sequence VISMRLPFCGHHVVSHFTCKILAVLKLACGNTSVSED. The N-linked (GlcNAc...) asparagine glycan is linked to N191. Residues 198–217 form a helical membrane-spanning segment; it reads FLLAGSILLLPVPLAFICLS. At 218 to 237 the chain is on the cytoplasmic side; it reads YLLILATILRVPSAARCCKA. Residues 238-258 form a helical membrane-spanning segment; that stretch reads FSTCLAHLAVVLLFYGTIIFM. The Extracellular portion of the chain corresponds to 259-271; sequence YLKPKSKEAHISD. Residues 272–292 form a helical membrane-spanning segment; the sequence is EVFTVLYAMVTTMLNPTIYSL. At 293–312 the chain is on the cytoplasmic side; the sequence is RNKEVKEAARKVWGRSRASR.

It belongs to the G-protein coupled receptor 1 family.

Its subcellular location is the cell membrane. Odorant receptor. The chain is Olfactory receptor 13J1 (OR13J1) from Homo sapiens (Human).